Here is a 263-residue protein sequence, read N- to C-terminus: Small ribosomal subunit protein uS2 (263 aa).

The interval 223–246 is disordered; the sequence is KSLLEQDSDANADEAEVSQEEKDA. The segment covering 228 to 240 has biased composition (acidic residues); it reads QDSDANADEAEVS.

Belongs to the universal ribosomal protein uS2 family.

The protein is Small ribosomal subunit protein uS2 of Campylobacter curvus (strain 525.92).